The primary structure comprises 35 residues: Cycloamanide F proprotein (35 aa).

Residues 1–10 (MSDINATRLP) constitute a propeptide that is removed on maturation. Residues 11–18 (IVGILGLP) constitute a cross-link (cyclopeptide (Ile-Pro)). Positions 19 to 35 (CIGDDVNSTLTHGEDLC) are excised as a propeptide.

Belongs to the MSDIN fungal toxin family. In terms of processing, processed by the macrocyclase-peptidase enzyme POPB to yield a cyclic decapeptide. POPB first removes 10 residues from the N-terminus. Conformational trapping of the remaining peptide forces the enzyme to release this intermediate rather than proceed to macrocyclization. The enzyme rebinds the remaining peptide in a different conformation and catalyzes macrocyclization of the N-terminal 8 residues.

In terms of biological role, cyclic octapeptide that belongs to the MSDIN-like toxin family responsible for a large number of food poisoning cases and deaths. Cycloaminide E is structurally related to other cycloamanides that are non-toxic to mammals but show immunosuppressive activity. In Amanita phalloides (Death cap), this protein is Cycloamanide F proprotein.